A 176-amino-acid chain; its full sequence is NAD(P)H-quinone oxidoreductase subunit 6, chloroplastic (176 aa).

The next 5 membrane-spanning stretches (helical) occupy residues 10 to 30, 32 to 52, 61 to 81, 92 to 112, and 152 to 172; these read FLLV…VLLP, PIFS…LYIL, AQLL…VMFM, LWTV…FSLM, and FFLP…GAIS.

It belongs to the complex I subunit 6 family. NDH is composed of at least 16 different subunits, 5 of which are encoded in the nucleus.

It is found in the plastid. The protein localises to the chloroplast thylakoid membrane. It carries out the reaction a plastoquinone + NADH + (n+1) H(+)(in) = a plastoquinol + NAD(+) + n H(+)(out). It catalyses the reaction a plastoquinone + NADPH + (n+1) H(+)(in) = a plastoquinol + NADP(+) + n H(+)(out). Functionally, NDH shuttles electrons from NAD(P)H:plastoquinone, via FMN and iron-sulfur (Fe-S) centers, to quinones in the photosynthetic chain and possibly in a chloroplast respiratory chain. The immediate electron acceptor for the enzyme in this species is believed to be plastoquinone. Couples the redox reaction to proton translocation, and thus conserves the redox energy in a proton gradient. This is NAD(P)H-quinone oxidoreductase subunit 6, chloroplastic (ndhG) from Nasturtium officinale (Watercress).